Reading from the N-terminus, the 88-residue chain is UPF0297 protein str1959 (88 aa).

The protein belongs to the UPF0297 family.

The sequence is that of UPF0297 protein str1959 from Streptococcus thermophilus (strain CNRZ 1066).